The following is a 448-amino-acid chain: Homogentisate 1,2-dioxygenase (448 aa).

Catalysis depends on histidine 303, which acts as the Proton acceptor. Histidine 346 and glutamate 352 together coordinate Fe cation. Homogentisate contacts are provided by tyrosine 361 and histidine 382. Residue histidine 382 coordinates Fe cation.

It belongs to the homogentisate dioxygenase family. In terms of assembly, hexamer; dimer of trimers. Fe cation serves as cofactor.

The catalysed reaction is homogentisate + O2 = 4-maleylacetoacetate + H(+). Its pathway is amino-acid degradation; L-phenylalanine degradation; acetoacetate and fumarate from L-phenylalanine: step 4/6. In terms of biological role, involved in the catabolism of homogentisate (2,5-dihydroxyphenylacetate or 2,5-OH-PhAc), a central intermediate in the degradation of phenylalanine and tyrosine. Catalyzes the oxidative ring cleavage of the aromatic ring of homogentisate to yield maleylacetoacetate. The chain is Homogentisate 1,2-dioxygenase from Rhodopseudomonas palustris (strain BisA53).